The chain runs to 268 residues: DNA repair protein RecO (268 aa).

Belongs to the RecO family.

In terms of biological role, involved in DNA repair and RecF pathway recombination. The sequence is that of DNA repair protein RecO from Mycobacterium leprae (strain Br4923).